Here is a 196-residue protein sequence, read N- to C-terminus: Holliday junction branch migration complex subunit RuvA (196 aa).

The domain I stretch occupies residues 1–61; that stretch reads MYEYFEGIVT…DTGITLYGFQ (61 aa). A domain II region spans residues 62 to 140; the sequence is SEDDKGLFLK…DYVARLDRQD (79 aa). The interval 141–149 is flexible linker; the sequence is EEQGNISPA. A domain III region spans residues 149–196; it reads ALNDALLALIALGYTQKEVDRITTKLEEVNADTADQYIKKGLALLLKK.

Belongs to the RuvA family. As to quaternary structure, homotetramer. Forms an RuvA(8)-RuvB(12)-Holliday junction (HJ) complex. HJ DNA is sandwiched between 2 RuvA tetramers; dsDNA enters through RuvA and exits via RuvB. An RuvB hexamer assembles on each DNA strand where it exits the tetramer. Each RuvB hexamer is contacted by two RuvA subunits (via domain III) on 2 adjacent RuvB subunits; this complex drives branch migration. In the full resolvosome a probable DNA-RuvA(4)-RuvB(12)-RuvC(2) complex forms which resolves the HJ.

The protein resides in the cytoplasm. Functionally, the RuvA-RuvB-RuvC complex processes Holliday junction (HJ) DNA during genetic recombination and DNA repair, while the RuvA-RuvB complex plays an important role in the rescue of blocked DNA replication forks via replication fork reversal (RFR). RuvA specifically binds to HJ cruciform DNA, conferring on it an open structure. The RuvB hexamer acts as an ATP-dependent pump, pulling dsDNA into and through the RuvAB complex. HJ branch migration allows RuvC to scan DNA until it finds its consensus sequence, where it cleaves and resolves the cruciform DNA. The polypeptide is Holliday junction branch migration complex subunit RuvA (Lactobacillus helveticus (strain DPC 4571)).